The primary structure comprises 888 residues: uncharacterized protein (888 aa).

The first 20 residues, 1 to 20 (MKILKSLVLLVLFIVMPAKA), serve as a signal peptide directing secretion. The next 6 membrane-spanning stretches (helical) occupy residues 513–533 (IVKA…VAGA), 565–585 (TYFF…VVGA), 611–631 (LLFI…IITI), 649–669 (VIAF…IILM), 682–702 (ISTL…FLLI), and 781–801 (LLFY…NIVV).

It belongs to the TrbL/VirB6 family.

It is found in the cell membrane. This is an uncharacterized protein from Rickettsia prowazekii (strain Madrid E).